Reading from the N-terminus, the 553-residue chain is MSDIALSISMLSLVAVLGLWLGNWRVYGVGLGIGGVLFGGIIVGHFAGLSGLALDEQTLHFIQEFGLILFVYTIGIQVGPGFFSSLRSSGLKLNGFAALLVLLGCAVAAALHQLFDVPLPVILGVFSGAVTNTPSLGAGQQILAELGAAPGSTGLMGMGYAVAYPFGICGILLTMWLIRMFFRIKIDEEAAQFEQQAGKTKESLQTINIAVRNPNIHGLMLSEIPSLDEADVICSRLKRGDELMVPRPDSRIELGDLLHLVGERHALRKVLLVLGEEVETSLSTRGTDLRVERVVVTNEQVLGKKIRDLDIKQKYDVVISRLNRAGIELVPTSQTSLQFGDILNLVGRLDAIEAVTNVVGNVQQKLQQVQMLPVFIGIGLGVLLGSIPFYLPGFPAALKLGLAGGPLVVALILSRIGSIGKLYWFMPPSANLALREIGIVLFLAVVGFKSGAGFIDTLINGDGPAWMMYGVAITLIPLLVVGVLARLYGKMNYLTLCGLLAGSMTDPPALAFANGMHPTSGASALSYATVYPLVMFLRIISPQLLAILLWAGA.

5 helical membrane passes run 4 to 24 (IALSISMLSLVAVLGLWLGNW), 29 to 49 (VGLGIGGVLFGGIIVGHFAGL), 65 to 85 (FGLILFVYTIGIQVGPGFFSS), 95 to 115 (GFAALLVLLGCAVAAALHQLF), and 158 to 178 (MGYAVAYPFGICGILLTMWLI). RCK C-terminal domains follow at residues 191–276 (AQFE…VLGE) and 279–361 (ETSL…VVGN). 6 helical membrane passes run 371-391 (MLPVFIGIGLGVLLGSIPFYL), 403-425 (AGGPLVVALILSRIGSIGKLYWF), 439-459 (IVLFLAVVGFKSGAGFIDTLI), 465-485 (AWMMYGVAITLIPLLVVGVLA), 493-513 (YLTLCGLLAGSMTDPPALAFA), and 533-553 (LVMFLRIISPQLLAILLWAGA).

This sequence belongs to the AAE transporter (TC 2.A.81) family. YidE subfamily.

Its subcellular location is the cell membrane. In Aeromonas hydrophila subsp. hydrophila (strain ATCC 7966 / DSM 30187 / BCRC 13018 / CCUG 14551 / JCM 1027 / KCTC 2358 / NCIMB 9240 / NCTC 8049), this protein is Putative transport protein AHA_3492.